The chain runs to 609 residues: Cell division protein DipM (609 aa).

The signal sequence occupies residues 1-24 (MRQLWTQAAVIALTAGTLGAPAHA). The tract at residues 21–103 (PAHASGQSGQ…PVLRATPPRT (83 aa)) is disordered. Polar residues predominate over residues 25-38 (SGQSGQRFTPNFPI). Positions 79 to 93 (LPPPAPVSTPAPAPQ) are enriched in pro residues. LysM domains follow at residues 121 to 165 (QVRV…KIKG) and 171 to 215 (KAYV…KLLL). 2 stretches are compositionally biased toward low complexity: residues 242-258 (AEPA…AATP) and 265-280 (PVSE…STTT). Residues 242 to 280 (AEPAPATTRPATPAATPSRPVRQPVSEETSEPATTSTTT) form a disordered region. 2 consecutive LysM domains span residues 295 to 339 (QVHT…KIKG) and 345 to 389 (KAYS…KIAL). Positions 389 to 457 (LPDGFRDKGP…AAQPITPPPS (69 aa)) are disordered. Over residues 400–429 (RTTTTTRPATPPANTYARVDSSAAAASTPS) the composition is skewed to low complexity. The lytM stretch occupies residues 503 to 603 (NDGLNIRAPQ…VKDKAKPVDP (101 aa)).

The protein resides in the periplasm. In terms of biological role, required for efficient cell division, cell polarity and normal cell morphology. Facilitates remodeling of the peptidoglycan layer and, thus, coordinated constriction of the cell envelope during the division process. Plays a critical role in maintaining proper cell envelope architecture during growth and division. Required for normal envelope invagination during cell division and to establish or maintain outer membrane connections throughout the cell envelope. May serve as a regulatory hub coordinating the activities of multiple peptidoglycan-degrading enzymes during cell constriction. Required to position SdpA and SdpB at midcell. This Caulobacter vibrioides (strain NA1000 / CB15N) (Caulobacter crescentus) protein is Cell division protein DipM.